The sequence spans 397 residues: Mannonate dehydratase (397 aa).

The protein belongs to the mannonate dehydratase family. Requires Fe(2+) as cofactor. The cofactor is Mn(2+).

The catalysed reaction is D-mannonate = 2-dehydro-3-deoxy-D-gluconate + H2O. It functions in the pathway carbohydrate metabolism; pentose and glucuronate interconversion. Catalyzes the dehydration of D-mannonate. The chain is Mannonate dehydratase from Yersinia pestis bv. Antiqua (strain Angola).